A 166-amino-acid polypeptide reads, in one-letter code: Interferon gamma (166 aa).

The first 23 residues, 1–23, serve as a signal peptide directing secretion; sequence MSYTTYFLAFQLCVTLCFSGSYC. Position 24 is a pyrrolidone carboxylic acid (Q24). N-linked (GlcNAc...) asparagine glycans are attached at residues N39 and N106.

It belongs to the type II (or gamma) interferon family. In terms of assembly, homodimer. Interacts with IFNGR1 (via extracellular domain); this interaction promotes IFNGR1 dimerization. Released primarily from activated T lymphocytes.

It is found in the secreted. Type II interferon produced by immune cells such as T-cells and NK cells that plays crucial roles in antimicrobial, antiviral, and antitumor responses by activating effector immune cells and enhancing antigen presentation. Primarily signals through the JAK-STAT pathway after interaction with its receptor IFNGR1 to affect gene regulation. Upon IFNG binding, IFNGR1 intracellular domain opens out to allow association of downstream signaling components JAK2, JAK1 and STAT1, leading to STAT1 activation, nuclear translocation and transcription of IFNG-regulated genes. Many of the induced genes are transcription factors such as IRF1 that are able to further drive regulation of a next wave of transcription. Plays a role in class I antigen presentation pathway by inducing a replacement of catalytic proteasome subunits with immunoproteasome subunits. In turn, increases the quantity, quality, and repertoire of peptides for class I MHC loading. Increases the efficiency of peptide generation also by inducing the expression of activator PA28 that associates with the proteasome and alters its proteolytic cleavage preference. Up-regulates as well MHC II complexes on the cell surface by promoting expression of several key molecules such as cathepsins B/CTSB, H/CTSH, and L/CTSL. Participates in the regulation of hematopoietic stem cells during development and under homeostatic conditions by affecting their development, quiescence, and differentiation. The polypeptide is Interferon gamma (IFNG) (Sus scrofa (Pig)).